The sequence spans 521 residues: GMP synthase [glutamine-hydrolyzing] (521 aa).

A Glutamine amidotransferase type-1 domain is found at 5–197 (KILILDFGSQ…VLDICGAQPG (193 aa)). C81 serves as the catalytic Nucleophile. Active-site residues include H171 and E173. Residues 198–390 (WTMPNYIEEA…LGLPREMVYR (193 aa)) enclose the GMPS ATP-PPase domain. Position 225 to 231 (225 to 231 (SGGVDSS)) interacts with ATP.

Homodimer.

The catalysed reaction is XMP + L-glutamine + ATP + H2O = GMP + L-glutamate + AMP + diphosphate + 2 H(+). Its pathway is purine metabolism; GMP biosynthesis; GMP from XMP (L-Gln route): step 1/1. Its function is as follows. Catalyzes the synthesis of GMP from XMP. In Neisseria gonorrhoeae (strain NCCP11945), this protein is GMP synthase [glutamine-hydrolyzing].